A 295-amino-acid polypeptide reads, in one-letter code: MVRRLTSPRLEFEAAAIYEYPEHLRSFLNDLPTRPGVYLFHGESDTMPLYIGKSVNIRSRVLSHLRTPDEAAMLRQSRRISWICTAGEIGALLLEARLIKEQQPLFNKRLRRNRQLCALQLNEKRVDVVYAKEVDFSRAPNLFGLFANRRAALQALQSIADEQKLCYGLLGLEPLSRGRACFRSALKRCAGACCGKESHEEHALRLRQSLERLRVVCWPWQGAVALKEQHPEMTQYHIIQNWLWLGAVNSLEEATTLIRTPAGFDHDGYKILCKPLLSGNYEITELDPANDQRAS.

One can recognise a GIY-YIG domain in the interval 33–108 (TRPGVYLFHG…IKEQQPLFNK (76 aa)).

Its function is as follows. Incises the DNA at the 3' side of a lesion during nucleotide excision repair. Incises the DNA farther away from the lesion than UvrC. Not able to incise the 5' site of a lesion. When a lesion remains because UvrC is not able to induce the 3' incision, Cho incises the DNA. Then UvrC makes the 5' incision. The combined action of Cho and UvrC broadens the substrate range of nucleotide excision repair. The sequence is that of Excinuclease cho (cho) from Escherichia coli O157:H7.